Reading from the N-terminus, the 484-residue chain is Tubulin-like protein TubZ (484 aa).

GTP is bound at residue Q32 to K33. Position 64 (D64) interacts with Mg(2+). Residues G140 to G142, N213, K237, and N241 contribute to the GTP site. A required to bind TubR-DNA complex region spans residues R408–R484. Residues T428–R484 form a disordered region. Residues F452–R484 show a composition bias toward polar residues.

This sequence belongs to the FtsZ family. TubZ subfamily. In terms of assembly, forms filaments; a 2-stranded filament forms with the non-hydrolyzable GTP-gamma-S which is probably a precursor to the 4-stranded filament that forms in the presence of GTP. The 4-stranded form binds GDP. In vivo polymerizes to form dynamic filaments that often extend from one cell pole to the other, moving in a unidirectional manner. Filaments polymerize at the plus end and depolymerize at the minus end, a process called treadmilling. Polymerization only occurs above a critical concentration, it does not require upstream tubR. The tubC DNA-TubR complex binds to TubZ. The cofactor is Mg(2+).

The protein localises to the cytoplasm. The enzyme catalyses GTP + H2O = GDP + phosphate + H(+). GTPase is inhibited by GTP-gamma-S, which also stabilizes filaments. A tubulin-like, filament forming GTPase; the motor component of the type III plasmid partition system which ensures correct segregation of the pBtoxis plasmid. Filaments may seed from the centromere-like site (tubC) when bound by DNA-binding protein TubR; the tubC-TubR complex stabilizes the TubZ filament. Filaments grow at the plus end and depolymerize at the minus end, a process called treadmilling. TubR-tubC complexes track the depolymerizing minus end of the filament, probably pulling plasmid within the cell. Required for pBtoxis plasmid replication/partition. Binds the TubR-tubC complex; GTP is not required for binding to TubR-tubC. TubZ alone does not bind DNA. Has a high GTPase activity in the presence of Mg(2+); in the presence of GTP assembles into dynamic filaments which upon polymerization bind almost exclusively GDP. Filament formation is cooperative, requiring a critical concentration. Formation occurs very quickly and is followed by disassembly as GTP is consumed. The sequence is that of Tubulin-like protein TubZ from Bacillus thuringiensis subsp. israelensis.